A 359-amino-acid chain; its full sequence is Tropomodulin-1 (359 aa).

Residues 36-61 (ELDPDNALLPAGLRQKDQTTKAPTGP) are disordered. Residues 39 to 138 (PDNALLPAGL…CDIAAILGMH (100 aa)) form a tropomyosin-binding region.

Belongs to the tropomodulin family. Binds to the N-terminus of tropomyosin and to actin. Interacts with FLII. As to expression, highly expressed in the erythrocyte, heart and skeletal muscle.

It localises to the cytoplasm. It is found in the cytoskeleton. Blocks the elongation and depolymerization of the actin filaments at the pointed end. The Tmod/TM complex contributes to the formation of the short actin protofilament, which in turn defines the geometry of the membrane skeleton. This chain is Tropomodulin-1 (Tmod1), found in Mus musculus (Mouse).